The following is a 204-amino-acid chain: Potassium-transporting ATPase KdpC subunit (204 aa).

Residues 21-41 (AALVIFVGLSLVTGVLYPVVV) traverse the membrane as a helical segment.

The protein belongs to the KdpC family. In terms of assembly, the system is composed of three essential subunits: KdpA, KdpB and KdpC.

The protein localises to the cell inner membrane. In terms of biological role, part of the high-affinity ATP-driven potassium transport (or Kdp) system, which catalyzes the hydrolysis of ATP coupled with the electrogenic transport of potassium into the cytoplasm. This subunit acts as a catalytic chaperone that increases the ATP-binding affinity of the ATP-hydrolyzing subunit KdpB by the formation of a transient KdpB/KdpC/ATP ternary complex. This is Potassium-transporting ATPase KdpC subunit from Ralstonia nicotianae (strain ATCC BAA-1114 / GMI1000) (Ralstonia solanacearum).